The primary structure comprises 132 residues: L-ectoine synthase (132 aa).

This sequence belongs to the ectoine synthase family.

The enzyme catalyses (2S)-4-acetamido-2-aminobutanoate = L-ectoine + H2O. The protein operates within amine and polyamine biosynthesis; ectoine biosynthesis; L-ectoine from L-aspartate 4-semialdehyde: step 3/3. In terms of biological role, catalyzes the circularization of gamma-N-acetyl-alpha,gamma-diaminobutyric acid (ADABA) to ectoine (1,4,5,6-tetrahydro-2-methyl-4-pyrimidine carboxylic acid), which is an excellent osmoprotectant. The chain is L-ectoine synthase (ectC) from Streptomyces anulatus (Streptomyces chrysomallus).